The chain runs to 376 residues: Branched-chain-amino-acid aminotransferase, cytosolic (376 aa).

Residue Lys-202 is modified to N6-(pyridoxal phosphate)lysine.

The protein belongs to the class-IV pyridoxal-phosphate-dependent aminotransferase family. Pyridoxal 5'-phosphate serves as cofactor.

The protein resides in the cytoplasm. It catalyses the reaction L-leucine + 2-oxoglutarate = 4-methyl-2-oxopentanoate + L-glutamate. It carries out the reaction L-isoleucine + 2-oxoglutarate = (S)-3-methyl-2-oxopentanoate + L-glutamate. The catalysed reaction is L-valine + 2-oxoglutarate = 3-methyl-2-oxobutanoate + L-glutamate. The enzyme catalyses a 2-oxocarboxylate + L-methionine = 4-methylsulfanyl-2-oxobutanoate + an L-alpha-amino acid. It participates in amino-acid biosynthesis; L-isoleucine biosynthesis; L-isoleucine from 2-oxobutanoate: step 4/4. The protein operates within amino-acid biosynthesis; L-leucine biosynthesis; L-leucine from 3-methyl-2-oxobutanoate: step 4/4. It functions in the pathway amino-acid biosynthesis; L-valine biosynthesis; L-valine from pyruvate: step 4/4. Its pathway is amino-acid biosynthesis; L-methionine biosynthesis via salvage pathway; L-methionine from S-methyl-5-thio-alpha-D-ribose 1-phosphate: step 6/6. In terms of biological role, cytoplasmic isozyme of branched-chain-amino-acid aminotransferase, which catalyzes the first reaction in the catabolism of the essential branched chain amino acids (BCAAs) leucine, isoleucine, and valine. Catalyzes the formation of methionine from 2-keto-4-methylthiobutyrate (KMTB) in the methionine salvage pathway primarily using BCAAs (leucine, isoleucine, and valine) as well as lysine and proline as the amino donors. Involved in cell cycle regulation. This Saccharomyces cerevisiae (strain ATCC 204508 / S288c) (Baker's yeast) protein is Branched-chain-amino-acid aminotransferase, cytosolic.